A 123-amino-acid chain; its full sequence is MERIERISEEIKREISDIIQNELKDPRLSKLISITEVNVTKDLRYAKVYVSVMGSEEEKANSLEGLKSAAGFIRREIGRRVQLRYTPEIHFELDNSIERGAYITKLINETSAQNKGSKDPEDT.

It belongs to the RbfA family. In terms of assembly, monomer. Binds 30S ribosomal subunits, but not 50S ribosomal subunits or 70S ribosomes.

The protein resides in the cytoplasm. Functionally, one of several proteins that assist in the late maturation steps of the functional core of the 30S ribosomal subunit. Associates with free 30S ribosomal subunits (but not with 30S subunits that are part of 70S ribosomes or polysomes). Required for efficient processing of 16S rRNA. May interact with the 5'-terminal helix region of 16S rRNA. In Acetivibrio thermocellus (strain ATCC 27405 / DSM 1237 / JCM 9322 / NBRC 103400 / NCIMB 10682 / NRRL B-4536 / VPI 7372) (Clostridium thermocellum), this protein is Ribosome-binding factor A.